The sequence spans 203 residues: Outer-membrane lipoprotein carrier protein (203 aa).

The signal sequence occupies residues 1-21 (MKKLILIGCLMAGMNINVAWA).

Belongs to the LolA family. In terms of assembly, monomer.

Its subcellular location is the periplasm. Participates in the translocation of lipoproteins from the inner membrane to the outer membrane. Only forms a complex with a lipoprotein if the residue after the N-terminal Cys is not an aspartate (The Asp acts as a targeting signal to indicate that the lipoprotein should stay in the inner membrane). The chain is Outer-membrane lipoprotein carrier protein from Photorhabdus laumondii subsp. laumondii (strain DSM 15139 / CIP 105565 / TT01) (Photorhabdus luminescens subsp. laumondii).